Reading from the N-terminus, the 415-residue chain is Adipocyte plasma membrane-associated protein (415 aa).

Residues 1 to 29 (MSEADGLRQRRPLRPQVVTDDGQVPEVKE) form a disordered region. Ser2 carries the post-translational modification N-acetylserine. Residues 2-39 (SEADGLRQRRPLRPQVVTDDGQVPEVKEGSSFSGRVFR) are Cytoplasmic-facing. The residue at position 19 (Thr19) is a Phosphothreonine. A helical; Signal-anchor for type II membrane protein transmembrane segment spans residues 40–60 (MTFLMLAVSLAIPLLGAMMLL). The Extracellular portion of the chain corresponds to 61-415 (ESPIDPQSFS…FICRLSLQSI (355 aa)). An N-linked (GlcNAc...) asparagine glycan is attached at Asn159.

It belongs to the strictosidine synthase family. In terms of processing, glycosylated in vitro. In terms of tissue distribution, strongly expressed in adipose tissue. Highly expressed in liver, heart, and kidney. Expressed at intermediate level in brain and lung. Weakly expressed in spleen, skeletal muscle and testis.

The protein resides in the membrane. Functionally, exhibits strong arylesterase activity with beta-naphthyl acetate and phenyl acetate. May play a role in adipocyte differentiation. The protein is Adipocyte plasma membrane-associated protein (Apmap) of Mus musculus (Mouse).